The sequence spans 388 residues: Mannitol-1-phosphate 5-dehydrogenase (388 aa).

Position 4 to 15 (Ala4 to Gly15) interacts with NAD(+).

Belongs to the mannitol dehydrogenase family.

It carries out the reaction D-mannitol 1-phosphate + NAD(+) = beta-D-fructose 6-phosphate + NADH + H(+). This Lactococcus lactis subsp. cremoris (strain SK11) protein is Mannitol-1-phosphate 5-dehydrogenase.